The chain runs to 591 residues: Adenine deaminase (591 aa).

It belongs to the metallo-dependent hydrolases superfamily. Adenine deaminase family. Homodimer. The cofactor is Mn(2+).

It catalyses the reaction adenine + H2O + H(+) = hypoxanthine + NH4(+). The chain is Adenine deaminase from Edwardsiella ictaluri (strain 93-146).